Reading from the N-terminus, the 141-residue chain is ATP synthase epsilon chain (141 aa).

The protein belongs to the ATPase epsilon chain family. As to quaternary structure, F-type ATPases have 2 components, CF(1) - the catalytic core - and CF(0) - the membrane proton channel. CF(1) has five subunits: alpha(3), beta(3), gamma(1), delta(1), epsilon(1). CF(0) has three main subunits: a, b and c.

It localises to the cell inner membrane. In terms of biological role, produces ATP from ADP in the presence of a proton gradient across the membrane. This Dechloromonas aromatica (strain RCB) protein is ATP synthase epsilon chain.